A 187-amino-acid chain; its full sequence is Ribosome-recycling factor (187 aa).

The protein belongs to the RRF family.

The protein localises to the cytoplasm. Its function is as follows. Responsible for the release of ribosomes from messenger RNA at the termination of protein biosynthesis. May increase the efficiency of translation by recycling ribosomes from one round of translation to another. In Roseobacter denitrificans (strain ATCC 33942 / OCh 114) (Erythrobacter sp. (strain OCh 114)), this protein is Ribosome-recycling factor.